Here is a 544-residue protein sequence, read N- to C-terminus: Potential vesicular glutamate transporter vglu-3 (544 aa).

Residues 1–49 (MPNGSIRNCANAVADTVRQTFSRKTWEHKEQLQTITEQKKFFLRKVRWQ) lie on the Cytoplasmic side of the membrane. The chain crosses the membrane as a helical span at residues 50–70 (IAILAHFGFAISFGIRSNFGV). The Extracellular portion of the chain corresponds to 71 to 104 (AKNRMVNNFTDAYGEVHEREFLWTGAEVGMMESS). The N-linked (GlcNAc...) asparagine glycan is linked to Asn78. The helical transmembrane segment at 105–125 (FFYGYAASQIPAGVLAAKFAP) threads the bilayer. The Cytoplasmic segment spans residues 126–127 (NK). A helical membrane pass occupies residues 128–148 (IFMLGILVASFMNILSAISFN). Residues 149–154 (FHPYTD) lie on the Extracellular side of the membrane. Residues 155–175 (IFVMVVQAVQGLALGVLYPAM) form a helical membrane-spanning segment. Residues 176–193 (HGVWKFWAPPLERSKLAT) are Cytoplasmic-facing. Residues 194–214 (TAFTGSSVGVMTGLPASAYLV) traverse the membrane as a helical segment. Residues 215–219 (SHFSW) are Extracellular-facing. Residues 220–240 (STPFYVFGVVGIIWSLIWMYV) form a helical membrane-spanning segment. The Cytoplasmic segment spans residues 241–285 (SSHSPETHGYISDDEKKQVTEKIGDVAVKNMSLTTLPWRDMMTSS). Residues 286 to 306 (AVWAIIICTFCRSWGFFLLLG) form a helical membrane-spanning segment. At 307–323 (NQLTYMKDVLHIDIKNS) the chain is on the extracellular side. The chain crosses the membrane as a helical span at residues 324-344 (GFISIFPQFGMCIVTLATGQL). At 345-360 (CDYLRSSGKMSTEAVR) the chain is on the cytoplasmic side. The helical transmembrane segment at 361–381 (KSVNTFGFTVEAMMLGCLAFV) threads the bilayer. Residues 382 to 384 (RDP) are Extracellular-facing. A helical transmembrane segment spans residues 385 to 405 (VIAVTCLVIACTGSGSVLSGF). Residues 406 to 416 (NVNHFDIAPRY) lie on the Cytoplasmic side of the membrane. A helical membrane pass occupies residues 417-437 (APILMGIANGLGAVAGVGGMV). Residues 438–450 (TNTVTYQNPDGWK) are Extracellular-facing. A helical transmembrane segment spans residues 451–471 (WVFLLAMAIDIFGVIFFLIFA). The Cytoplasmic portion of the chain corresponds to 472–544 (KGDVLPWARE…APAEKSESSS (73 aa)). A disordered region spans residues 501 to 544 (SLSRKTRNREGDTSYEKMEEDSEMKPCSKKVEARAPAEKSESSS). Residues 508–544 (NREGDTSYEKMEEDSEMKPCSKKVEARAPAEKSESSS) show a composition bias toward basic and acidic residues.

It belongs to the major facilitator superfamily. Sodium/anion cotransporter family. VGLUT subfamily.

It localises to the membrane. In Caenorhabditis elegans, this protein is Potential vesicular glutamate transporter vglu-3 (vglu-3).